We begin with the raw amino-acid sequence, 203 residues long: Dephospho-CoA kinase (203 aa).

In terms of domain architecture, DPCK spans 3-201 (SVGLTGGIGS…QRYLECAAAA (199 aa)). 11–16 (GSGKTT) provides a ligand contact to ATP.

The protein belongs to the CoaE family.

It is found in the cytoplasm. It catalyses the reaction 3'-dephospho-CoA + ATP = ADP + CoA + H(+). Its pathway is cofactor biosynthesis; coenzyme A biosynthesis; CoA from (R)-pantothenate: step 5/5. Catalyzes the phosphorylation of the 3'-hydroxyl group of dephosphocoenzyme A to form coenzyme A. The protein is Dephospho-CoA kinase of Burkholderia pseudomallei (strain 1710b).